A 56-amino-acid chain; its full sequence is uncharacterized protein (56 aa).

This is an uncharacterized protein from Borreliella burgdorferi (strain ATCC 35210 / DSM 4680 / CIP 102532 / B31) (Borrelia burgdorferi).